A 333-amino-acid polypeptide reads, in one-letter code: Ribonucleoside-diphosphate reductase small chain B (333 aa).

The Fe cation site is built by Asp-76, Glu-107, and His-110. Tyr-114 is an active-site residue. Residues Glu-169, Glu-203, and His-206 each coordinate Fe cation.

Belongs to the ribonucleoside diphosphate reductase small chain family. In terms of assembly, heterodimer of a large and a small chain. Fe cation serves as cofactor. Expressed in roots, rosette leaves, stems and flowers.

It is found in the cytoplasm. The enzyme catalyses a 2'-deoxyribonucleoside 5'-diphosphate + [thioredoxin]-disulfide + H2O = a ribonucleoside 5'-diphosphate + [thioredoxin]-dithiol. In terms of biological role, provides the precursors necessary for DNA synthesis. Catalyzes the biosynthesis of deoxyribonucleotides from the corresponding ribonucleotides. This chain is Ribonucleoside-diphosphate reductase small chain B (RNR2B), found in Arabidopsis thaliana (Mouse-ear cress).